Reading from the N-terminus, the 10746-residue chain is Extracellular matrix-binding protein ebh (10746 aa).

Residues M1–A39 form the signal peptide. Composition is skewed to polar residues over residues E41–Q59 and V67–E113. 3 disordered regions span residues E41 to Q174, M246 to V274, and I1340 to R1372. Low complexity predominate over residues A120–A130. The segment covering S132–E158 has biased composition (basic and acidic residues). Polar residues predominate over residues V162–V173. Residues Q248–S263 are compositionally biased toward low complexity. Over residues Y1356 to R1372 the composition is skewed to polar residues. 59 FIVAR domains span residues A2520–A2576, S2606–E2662, D2683–A2746, A2776–K2832, A2860–N2915, A2943–N2998, A3026–K3081, A3150–K3208, A3276–A3335, A3403–A3461, A3529–A3587, A3655–K3713, A3781–A3839, A3907–A3965, A4033–A4091, A4159–A4217, Q4285–A4343, A4411–A4469, A4537–I4595, A4663–A4721, A4789–A4847, A4915–M4973, A5041–A5099, A5167–A5225, A5293–A5351, A5419–A5477, A5545–A5603, A5671–A5729, A5797–A5855, A5923–A5981, A6049–K6107, A6175–A6232, A6300–A6358, A6426–A6484, A6552–A6610, A6678–A6736, A6804–A6862, A6930–A6988, A7056–A7114, A7182–A7240, A7308–A7366, A7434–A7492, A7560–A7618, A7686–A7744, A7812–A7870, A7938–A7996, A8064–E8125, A8190–E8251, A8316–A8374, A8442–A8500, A8568–A8625, L8693–A8751, A8819–A8877, A8945–L9003, A9071–L9129, A9197–A9255, S9323–A9377, V9445–L9504, and A9699–A9755. Positions D7066 to S7080 are enriched in polar residues. The tract at residues D7066–D7085 is disordered. Over residues D10492–H10507 the composition is skewed to polar residues. The interval D10492–L10530 is disordered. Residues I10552–I10572 form a helical membrane-spanning segment. The segment at R10649 to K10746 is disordered. Residues T10664–H10674 are compositionally biased toward basic and acidic residues. Positions K10719–K10746 are enriched in basic residues.

It localises to the cell membrane. In Staphylococcus aureus (strain MRSA252), this protein is Extracellular matrix-binding protein ebh (ebh).